The following is a 101-amino-acid chain: Small ribosomal subunit protein uS10 (101 aa).

The protein belongs to the universal ribosomal protein uS10 family. In terms of assembly, part of the 30S ribosomal subunit.

Involved in the binding of tRNA to the ribosomes. The chain is Small ribosomal subunit protein uS10 from Cytophaga hutchinsonii (strain ATCC 33406 / DSM 1761 / CIP 103989 / NBRC 15051 / NCIMB 9469 / D465).